The chain runs to 295 residues: Calcium-regulated actin-bundling protein (295 aa).

In terms of assembly, monomer.

May contribute to the structure and reorganization of filopodia and pseudopodia accompanying cell movements. This Dictyostelium discoideum (Social amoeba) protein is Calcium-regulated actin-bundling protein (abpB).